The following is a 605-amino-acid chain: Dynein axonemal intermediate chain 2 (605 aa).

WD repeat units follow at residues 150 to 203, 208 to 246, 253 to 294, 301 to 347, 355 to 393, 399 to 437, and 443 to 481; these read KTIN…IWDL, KPEL…CWDT, AELS…WWDI, TEVV…SCNR, KIVC…IWSE, SIMW…IWDF, and DPTL…LLEV. A disordered region spans residues 568 to 605; it reads IKLTPVPQQPSPEEDQVVEEGEEAAGEEGDEEVEEDLA. The segment covering 579–605 has biased composition (acidic residues); sequence PEEDQVVEEGEEAAGEEGDEEVEEDLA.

Belongs to the dynein intermediate chain family. As to quaternary structure, consists of at least two heavy chains and a number of intermediate and light chains. Interacts with DNAAF2. Interacts with DNAAF6/PIH1D3. Interacts with HEATR2; probably involved in outer arm dynein assembly. Interacts with CFAP53. As to expression, highly expressed in trachea and testis. Expressed in respiratory ciliated cells (at protein level).

The protein resides in the cytoplasm. It localises to the cytoskeleton. The protein localises to the cilium axoneme. Its subcellular location is the dynein axonemal particle. Its function is as follows. Part of the dynein complex of respiratory cilia. The chain is Dynein axonemal intermediate chain 2 from Homo sapiens (Human).